A 433-amino-acid chain; its full sequence is Divalent metal cation transporter MntH (433 aa).

A run of 11 helical transmembrane segments spans residues 32 to 52, 62 to 82, 101 to 121, 131 to 151, 168 to 188, 209 to 229, 256 to 276, 296 to 316, 345 to 365, 366 to 386, and 401 to 421; these read LIFA…GNFA, GYDL…FQGL, TLPP…AMAT, IGIA…TGIV, LVIG…LLIV, ALTI…LFLH, VLAA…MAAG, SPLL…ASGV, ALTM…TRAL, VLSQ…LLWF, and ITAI…VILL.

Belongs to the NRAMP family.

It is found in the cell inner membrane. Functionally, h(+)-stimulated, divalent metal cation uptake system. The protein is Divalent metal cation transporter MntH of Acidiphilium cryptum (strain JF-5).